We begin with the raw amino-acid sequence, 564 residues long: MNSSSKLIAVINGFRNSGRFCDINIVINDERINAHKLILSGASEYFSILFSNNFIDSNEYEVNLSHLDYQSVNDLIDYIYGIPLSLTNDNVKYILSTADFLQIGSAITECENYILKNLCSKNCIDFYIYADKYNNKKIESASFNTILQNILRLINDENFKYLTEESMIKILSDDMLNIKNEDFAPLILIKWLESTQQPCTVELLKCLRISLLSPQVIKSLYSHRLVSSIYECITFLNNIAFLDESFPRYHSIELISIGISNSRDKISINCYNHKKNTWEMISSRRYRCSFAVAVLDNIIYMMGGYDQSPYRSSKVIAYNTCTNSWIYDIPELKYPRSNCGGLADDEYIYCIGGIRDQDSSLTSSIDKWKPSKPYWQKYAKMREPKCDMGVAMLNGLIYVIGGIVKGDTCTDALESLSEDGWMKHQRLPIKMSNMSTIVHDGKIYISGGYNNSSVVNVISNLVLSYNSIYDEWTKLSSLNIPRINPALWSTHNKLYVGGGISDDVRTNTSETYDKEKDCWTLDNGHVLPRNYIMYKCEPIKHKYPLEKTQYTNDFLKYLESFIGS.

The region spanning 21 to 88 (CDINIVINDE…IYGIPLSLTN (68 aa)) is the BTB domain. Positions 123-219 (CIDFYIYADK…SLLSPQVIKS (97 aa)) constitute a BACK domain. Kelch repeat units lie at residues 252–297 (IELI…VLDN), 298–346 (IIYM…ADDE), 347–395 (YIYC…MLNG), 397–441 (IYVI…VHDG), and 442–492 (KIYI…STHN).

Interacts (via BTB domain) with host CUL3.

The protein resides in the host cytoplasm. Its function is as follows. Probable substrate-specific adapter of CUL3-containing E3 ubiquitin-protein ligases which mediate the ubiquitination and subsequent proteasomal degradation of host target proteins. The protein is Kelch repeat and BTB domain-containing protein 1 (KBTB1) of Bos taurus (Bovine).